The primary structure comprises 132 residues: Intraflagellar transport protein 20 homolog (132 aa).

An IFT57-binding region spans residues 70 to 132 (MKAIGARNLL…EFIDQFIFQK (63 aa)). A coiled-coil region spans residues 74 to 116 (GARNLLKSIAKQREAQQQQLQALIAEKKTQLERYRVEYEALCK).

Component of the IFT complex B, at least composed of IFT20, IFT22, IFT25, IFT27, IFT46, IFT52, TRAF3IP1/IFT54, IFT57, IFT74, IFT80, IFT81, and IFT88. Interacts directly with IFT57 and KIF3B/Kinesin II subunit. Interacts with IFT88. Interacts with CEP83. Interacts with SPEF2 (via C-terminus). Interacts with CBL and CBLB. Interacts with TRIP11. Interacts with TTC21A. Interacts with SPATA1. Interacts with USH1G. Interacts with CCDC146. Interacts with CEP78; regulating IFT20 stability and localization. In terms of tissue distribution, expressed predominantly in the testis (at protein level). Expressed in kidney and retina. Expression is up-regulated during spermiogenesis.

It localises to the golgi apparatus. The protein resides in the cis-Golgi network. The protein localises to the cytoplasm. Its subcellular location is the cytoskeleton. It is found in the microtubule organizing center. It localises to the centrosome. The protein resides in the centriole. The protein localises to the cilium basal body. Its subcellular location is the cell projection. It is found in the cilium. It localises to the cytoplasmic vesicle. The protein resides in the secretory vesicle. The protein localises to the acrosome. Functionally, part of intraflagellar transport (IFT) particles involved in ciliary process assembly. May play a role in the trafficking of ciliary membrane proteins from the Golgi complex to the cilium. Regulates the ciliary platelet-derived growth factor receptor-alpha (PDGFRA) signaling pathway. Required for protein stability of E3 ubiquitin ligases CBL and CBLB that mediate ubiquitination and internalization of PDGFRA for proper feedback inhibition of PDGFRA signaling. Essential for male fertility. Plays an important role in spermatogenesis, particularly spermiogenesis, when germ cells form flagella. May play a role in the transport of flagellar proteins ODF2 and SPAG16 to build sperm flagella and in the removal of redundant sperm cytoplasm. Also involved in autophagy since it is required for trafficking of ATG16L and the expansion of the autophagic compartment. This chain is Intraflagellar transport protein 20 homolog (Ift20), found in Mus musculus (Mouse).